Consider the following 302-residue polypeptide: Probable lipid kinase YegS-like (302 aa).

Positions 1-129 (MDKDKVLLVL…IDLGEVNGKL (129 aa)) constitute a DAGKc domain. ATP is bound by residues Thr39, 65–71 (GDGTLRE), and Thr92. Mg(2+)-binding residues include Arg210, Asp213, and Leu215. Glu268 (proton acceptor) is an active-site residue.

It belongs to the diacylglycerol/lipid kinase family. YegS lipid kinase subfamily. It depends on Mg(2+) as a cofactor. Ca(2+) is required as a cofactor.

It localises to the cytoplasm. Probably phosphorylates lipids; the in vivo substrate is unknown. The polypeptide is Probable lipid kinase YegS-like (Pseudomonas aeruginosa (strain ATCC 15692 / DSM 22644 / CIP 104116 / JCM 14847 / LMG 12228 / 1C / PRS 101 / PAO1)).